We begin with the raw amino-acid sequence, 947 residues long: Bifunctional glutamine synthetase adenylyltransferase/adenylyl-removing enzyme (947 aa).

Residues Met-1–Glu-440 form an adenylyl removase region. The interval Ser-450–Val-947 is adenylyl transferase.

It belongs to the GlnE family. The cofactor is Mg(2+).

The enzyme catalyses [glutamine synthetase]-O(4)-(5'-adenylyl)-L-tyrosine + phosphate = [glutamine synthetase]-L-tyrosine + ADP. It carries out the reaction [glutamine synthetase]-L-tyrosine + ATP = [glutamine synthetase]-O(4)-(5'-adenylyl)-L-tyrosine + diphosphate. Functionally, involved in the regulation of glutamine synthetase GlnA, a key enzyme in the process to assimilate ammonia. When cellular nitrogen levels are high, the C-terminal adenylyl transferase (AT) inactivates GlnA by covalent transfer of an adenylyl group from ATP to specific tyrosine residue of GlnA, thus reducing its activity. Conversely, when nitrogen levels are low, the N-terminal adenylyl removase (AR) activates GlnA by removing the adenylyl group by phosphorolysis, increasing its activity. The regulatory region of GlnE binds the signal transduction protein PII (GlnB) which indicates the nitrogen status of the cell. In Salmonella gallinarum (strain 287/91 / NCTC 13346), this protein is Bifunctional glutamine synthetase adenylyltransferase/adenylyl-removing enzyme.